Consider the following 227-residue polypeptide: Ribose-5-phosphate isomerase A (227 aa).

Residues 26-29, 82-85, and 95-98 contribute to the substrate site; these read TGST, DGAD, and KGGG. Catalysis depends on E104, which acts as the Proton acceptor. K122 contributes to the substrate binding site.

Belongs to the ribose 5-phosphate isomerase family. As to quaternary structure, homodimer.

The catalysed reaction is aldehydo-D-ribose 5-phosphate = D-ribulose 5-phosphate. It functions in the pathway carbohydrate degradation; pentose phosphate pathway; D-ribose 5-phosphate from D-ribulose 5-phosphate (non-oxidative stage): step 1/1. Functionally, catalyzes the reversible conversion of ribose-5-phosphate to ribulose 5-phosphate. The protein is Ribose-5-phosphate isomerase A of Streptococcus pneumoniae (strain Hungary19A-6).